The chain runs to 347 residues: MLKKSDFHYDLPEELIAQGPLPERSASRLMLVPSAPEQFQDCYVRDLPELLQPGDLLVFNDTRVIPARLFGRKVSGGRVEVLIERFLGTHQAVVQLRTSRSLKVGNRILLDAGGHAEVLGRDGEFYLLSFDVESPLEQWLSDVGQLPLPPYIHREPDEYDRERYQTVFARAVGAVAAPTAGLHFDESLLARLRARGVEFGYITLHVGAGTFQPVRVALLQEHVMHSEWFKVGAELVEQVRSARARGGRVIAVGTTVVRSLESAMRHGELQPFVGETQIFIFPGYCIRSVDAMVTNFHLPESTLLMLVAAFAGRTRILDAYYHAVQQRYRFFSYGDAMLLFPRNAGEQ.

This sequence belongs to the QueA family. In terms of assembly, monomer.

It is found in the cytoplasm. It catalyses the reaction 7-aminomethyl-7-carbaguanosine(34) in tRNA + S-adenosyl-L-methionine = epoxyqueuosine(34) in tRNA + adenine + L-methionine + 2 H(+). Its pathway is tRNA modification; tRNA-queuosine biosynthesis. Its function is as follows. Transfers and isomerizes the ribose moiety from AdoMet to the 7-aminomethyl group of 7-deazaguanine (preQ1-tRNA) to give epoxyqueuosine (oQ-tRNA). In Xylella fastidiosa (strain M12), this protein is S-adenosylmethionine:tRNA ribosyltransferase-isomerase.